A 289-amino-acid polypeptide reads, in one-letter code: NAD(P)H-hydrate epimerase (289 aa).

The YjeF N-terminal domain maps to 71-277 (AQTIDNELMS…SIVEKYNLKV (207 aa)). 122–126 (NNGGD) contacts (6S)-NADPHX. Positions 123 and 185 each coordinate K(+). Residues 189–195 (GFSFTGE) and Asp218 contribute to the (6S)-NADPHX site. Ser221 serves as a coordination point for K(+).

Belongs to the NnrE/AIBP family. K(+) is required as a cofactor.

The enzyme catalyses (6R)-NADHX = (6S)-NADHX. It catalyses the reaction (6R)-NADPHX = (6S)-NADPHX. Its function is as follows. Catalyzes the epimerization of the S- and R-forms of NAD(P)HX, a damaged form of NAD(P)H that is a result of enzymatic or heat-dependent hydration. This is a prerequisite for the S-specific NAD(P)H-hydrate dehydratase to allow the repair of both epimers of NAD(P)HX. The chain is NAD(P)H-hydrate epimerase from Plasmodium vivax (strain Salvador I).